Consider the following 78-residue polypeptide: U7-lycotoxin-Ls1h (78 aa).

Positions 1–22 are cleaved as a signal peptide; it reads MKLIIFTGLTLLLIVSLIDVEA. Positions 23 to 26 are excised as a propeptide; the sequence is QNEG.

The protein belongs to the neurotoxin 19 (CSTX) family. 07 (U7-Lctx) subfamily. Contains 4 disulfide bonds. As to expression, expressed by the venom gland.

The protein resides in the secreted. This chain is U7-lycotoxin-Ls1h, found in Lycosa singoriensis (Wolf spider).